The primary structure comprises 198 residues: MAMATSMSLNLIGAFKGLSLSSTSSFLRGDLSFSPKTSFTVTLPLENLQAPIPLTIESAHKKGAGSTKNGRDSPGQRLGVKIYGDQVAKPGAIIVRQRGTKFHAGKNVGIGKDHTIFSLIDGLVKFEKFGPDRKKISVYPREIVPENPNSYRARKRENFRLQREKKKARRENYSYTLPTPELVLASASVDDAEANPEC.

Residues 1 to 58 constitute a chloroplast transit peptide; the sequence is MAMATSMSLNLIGAFKGLSLSSTSSFLRGDLSFSPKTSFTVTLPLENLQAPIPLTIES.

The protein belongs to the bacterial ribosomal protein bL27 family. Part of the 50S ribosomal subunit.

It is found in the plastid. The protein resides in the chloroplast. The protein is Large ribosomal subunit protein bL27c (RPL27) of Arabidopsis thaliana (Mouse-ear cress).